A 166-amino-acid polypeptide reads, in one-letter code: NAD(P)H-quinone oxidoreductase subunit I, chloroplastic (166 aa).

2 consecutive 4Fe-4S ferredoxin-type domains span residues 55–84 (GRIH…VDWK) and 95–124 (LNYS…MTEE). [4Fe-4S] cluster contacts are provided by cysteine 64, cysteine 67, cysteine 70, cysteine 74, cysteine 104, cysteine 107, cysteine 110, and cysteine 114.

Belongs to the complex I 23 kDa subunit family. As to quaternary structure, NDH is composed of at least 16 different subunits, 5 of which are encoded in the nucleus. [4Fe-4S] cluster is required as a cofactor.

Its subcellular location is the plastid. It localises to the chloroplast thylakoid membrane. The catalysed reaction is a plastoquinone + NADH + (n+1) H(+)(in) = a plastoquinol + NAD(+) + n H(+)(out). The enzyme catalyses a plastoquinone + NADPH + (n+1) H(+)(in) = a plastoquinol + NADP(+) + n H(+)(out). NDH shuttles electrons from NAD(P)H:plastoquinone, via FMN and iron-sulfur (Fe-S) centers, to quinones in the photosynthetic chain and possibly in a chloroplast respiratory chain. The immediate electron acceptor for the enzyme in this species is believed to be plastoquinone. Couples the redox reaction to proton translocation, and thus conserves the redox energy in a proton gradient. This chain is NAD(P)H-quinone oxidoreductase subunit I, chloroplastic, found in Chamaechaenactis scaposa (Fullstem).